Consider the following 412-residue polypeptide: MAKRPLGLGKQSREKKRKVESVEKKSDEPSRESTPVRSQMSVELDDDADLDDELAQLKGLWSKYFHSDRDDEYVLNGIVHECDRLLRLSEEDKEIKKTLNDIFHGIYALALSELTIFKAGDEEATEEKRKKDVSSFFENAIERVELGLSHFPESQFLKLVLAKIIFQRIPLEYISNLHLKSKDKKLDLVGQLEHGKKHFSIYENDTEFTFEILQMVNDLLDIVENFGREQSIQEGIDSDNEEEEELIDIELEPEHPVYPLQQSLEANYEWLRNHFDKLLDNTNTDMKIYASIANTLGELYLKKAEEPSKVFLSLQYDDGSSKKVSDKEAKNVQETALKHTKKALEYLEKAKLEDDPDTWVQVAEAYIDLGNLLDNESAEQEEAYKTAEEILGKANKASHGKFQDVLDNFLQG.

Residues 1–45 form a disordered region; that stretch reads MAKRPLGLGKQSREKKRKVESVEKKSDEPSRESTPVRSQMSVELD. Over residues 17-31 the composition is skewed to basic and acidic residues; that stretch reads RKVESVEKKSDEPSR. The residue at position 30 (Ser-30) is a Phosphoserine. Residues 32–41 show a composition bias toward polar residues; that stretch reads ESTPVRSQMS.

Belongs to the ETT1 family. As to quaternary structure, interacts with STM1.

The protein localises to the nucleus. Its function is as follows. Required for correct translation termination and probably involved in regulation of hypoxic gene expression in association TPA1. Inhibits replication of Brome mosaic virus. In Saccharomyces cerevisiae (strain RM11-1a) (Baker's yeast), this protein is Enhancer of translation termination 1 (ETT1).